A 425-amino-acid polypeptide reads, in one-letter code: Glutamate-1-semialdehyde 2,1-aminomutase (425 aa).

Lysine 266 carries the post-translational modification N6-(pyridoxal phosphate)lysine.

It belongs to the class-III pyridoxal-phosphate-dependent aminotransferase family. HemL subfamily. In terms of assembly, homodimer. The cofactor is pyridoxal 5'-phosphate.

The protein localises to the cytoplasm. The catalysed reaction is (S)-4-amino-5-oxopentanoate = 5-aminolevulinate. The protein operates within porphyrin-containing compound metabolism; protoporphyrin-IX biosynthesis; 5-aminolevulinate from L-glutamyl-tRNA(Glu): step 2/2. This chain is Glutamate-1-semialdehyde 2,1-aminomutase, found in Nitratidesulfovibrio vulgaris (strain DSM 19637 / Miyazaki F) (Desulfovibrio vulgaris).